We begin with the raw amino-acid sequence, 504 residues long: Lysine--tRNA ligase (504 aa).

Positions 411 and 418 each coordinate Mg(2+).

It belongs to the class-II aminoacyl-tRNA synthetase family. As to quaternary structure, homodimer. Mg(2+) serves as cofactor.

The protein resides in the cytoplasm. It catalyses the reaction tRNA(Lys) + L-lysine + ATP = L-lysyl-tRNA(Lys) + AMP + diphosphate. The protein is Lysine--tRNA ligase of Clostridium botulinum (strain ATCC 19397 / Type A).